The sequence spans 290 residues: Elongation factor Ts (290 aa).

The interval 79-82 (TDFV) is involved in Mg(2+) ion dislocation from EF-Tu.

The protein belongs to the EF-Ts family.

Its subcellular location is the cytoplasm. In terms of biological role, associates with the EF-Tu.GDP complex and induces the exchange of GDP to GTP. It remains bound to the aminoacyl-tRNA.EF-Tu.GTP complex up to the GTP hydrolysis stage on the ribosome. This chain is Elongation factor Ts, found in Pseudoalteromonas atlantica (strain T6c / ATCC BAA-1087).